A 368-amino-acid polypeptide reads, in one-letter code: Zinc finger protein 24 (368 aa).

Lys-22 participates in a covalent cross-link: Glycyl lysine isopeptide (Lys-Gly) (interchain with G-Cter in SUMO2). Lys-27 is covalently cross-linked (Glycyl lysine isopeptide (Lys-Gly) (interchain with G-Cter in SUMO1); alternate). Lys-27 participates in a covalent cross-link: Glycyl lysine isopeptide (Lys-Gly) (interchain with G-Cter in SUMO2); alternate. The SCAN box domain maps to 52–134 (RQRFRQFGYQ…TVLEDLESEL (83 aa)). Phosphoserine is present on residues Ser-132 and Ser-142. Residues Lys-147, Lys-177, and Lys-236 each participate in a glycyl lysine isopeptide (Lys-Gly) (interchain with G-Cter in SUMO2) cross-link. Residues 251-273 (HICDECGKHFSQGSALILHQRIH) form a C2H2-type 1 zinc finger. The interval 251–301 (HICDECGKHFSQGSALILHQRIHSGEKPYGCVECGKAFSRSSILVQHQRVH) is necessary and sufficient for nuclear localization. Position 274 is a phosphoserine (Ser-274). Residues Lys-277 and Lys-286 each participate in a glycyl lysine isopeptide (Lys-Gly) (interchain with G-Cter in SUMO2) cross-link. 3 C2H2-type zinc fingers span residues 279–301 (YGCV…QRVH), 307–329 (YKCL…QRIH), and 335–357 (YECV…XXXH). Ser-292 bears the Phosphoserine mark. Tyr-335 is modified (phosphotyrosine). Residues Lys-361 and Lys-367 each participate in a glycyl lysine isopeptide (Lys-Gly) (interchain with G-Cter in SUMO2) cross-link.

This sequence belongs to the krueppel C2H2-type zinc-finger protein family. In terms of processing, sumoylated.

It localises to the nucleus. Transcription factor required for myelination of differentiated oligodendrocytes. Required for the conversion of oligodendrocytes from the premyelinating to the myelinating state. In the developing central nervous system (CNS), involved in the maintenance in the progenitor stage by promoting the cell cycle. Specifically binds to the 5'-TCAT-3' DNA sequence. Has transcription repressor activity in vitro. This chain is Zinc finger protein 24 (ZNF24), found in Pan paniscus (Pygmy chimpanzee).